Consider the following 680-residue polypeptide: Tumor protein 63 (680 aa).

The tract at residues 1–107 is transcription activation; that stretch reads MNFETSRCAT…MQDSDLSDPM (107 aa). The segment covering 122-157 has biased composition (polar residues); that stretch reads QQIQNGSSSTSPYNTDHAQNSVTAPSPYAQPSSTFD. The interval 122-171 is disordered; sequence QQIQNGSSSTSPYNTDHAQNSVTAPSPYAQPSSTFDALSPSPAIPSNTDY. Residues 170 to 362 mediate DNA binding; the sequence is DYPGPHSFDV…KADEDSIRKQ (193 aa). Zn(2+) is bound by residues C244, H247, C308, and C312. Over residues 351–360 the composition is skewed to basic and acidic residues; it reads DRKADEDSIR. Disordered regions lie at residues 351-393 and 436-472; these read DRKA…IKKR and RQQQ…MNSM. Positions 352–388 are interaction with HIPK2; it reads RKADEDSIRKQQVSDSAKNGDGTKRPFRQNTHGIQMT. Residues 379-389 are compositionally biased toward polar residues; sequence RQNTHGIQMTS. Positions 394-443 are oligomerization; that stretch reads RSPDDELLYLPVRGRETYEMLLKIKESLELMQYLPQHTIETYRQQQQQQH. A compositionally biased stretch (low complexity) spans 437–463; the sequence is QQQQQQHQHLLQKQTSMQSQSSYGNSS. Positions 541–607 constitute an SAM domain; that stretch reads PPYPTDCSIV…WKGILDHRQL (67 aa). Residues 610–680 form a transactivation inhibition region; the sequence is FSSPPHLLRT…KQQRIKEEGE (71 aa). Residue K676 forms a Glycyl lysine isopeptide (Lys-Gly) (interchain with G-Cter in SUMO) linkage.

Belongs to the p53 family. As to quaternary structure, binds DNA as a homotetramer. Isoform composition of the tetramer may determine transactivation activity. Interacts with HIPK2. Interacts with SSRP1, leading to stimulate coactivator activity. Interacts with WWP1. Interacts with PDS5A. Interacts (via activation domain) with NOC2L. Zn(2+) is required as a cofactor. Post-translationally, may be sumoylated. Ubiquitinated. Polyubiquitination involves WWP1 and leads to proteasomal degradation of this protein. As to expression, widely expressed, notably in thymus, prostate, placenta, and skeletal muscle, although the precise isoform varies according to tissue type. Progenitor cell layers of skin, breast and prostate express high levels of DeltaN-type isoforms.

It localises to the nucleus. Its function is as follows. Acts as a sequence specific DNA binding transcriptional activator or repressor. The isoforms contain a varying set of transactivation and auto-regulating transactivation inhibiting domains thus showing an isoform specific activity. May be required in conjunction with TP73/p73 for initiation of p53/TP53 dependent apoptosis in response to genotoxic insults and the presence of activated oncogenes. Involved in Notch signaling by probably inducing JAG1 and JAG2. Activates RIPK4 transcription. Plays a role in the regulation of epithelial morphogenesis. The ratio of DeltaN-type and TA*-type isoforms may govern the maintenance of epithelial stem cell compartments and regulate the initiation of epithelial stratification from the undifferentiated embryonal ectoderm. Required for limb formation from the apical ectodermal ridge. Activates transcription of the p21 promoter. In Rattus norvegicus (Rat), this protein is Tumor protein 63 (Tp63).